Here is a 365-residue protein sequence, read N- to C-terminus: MSKNVVSLVKDDSDKKKALDAALSQIERSFGKGSIMRLGKNEQIVEIESVSTGSLGLDIALGIGGLPRGRIIEIYGPESSGKTTLALQTVAEAQKSGGVCAFVDAEHALDPIYARKLGVQLDDLLISQPDTGEQALEIADTLVRSGAVDVLVIDSVAALTPKAELEGEMGDSLPGLQARLMSQALRKLTGSISKSNTMVIFINQIRMKIGVMFGSPETTTGGNALKFYASVRLDIRRIGAIKDRDEVVGNQTRVKVVKNKVAPPFKQVEFDIMYGEGISKMGELVDLGSKAGIVEKSGSWFSYNSQRIGQGRENAKQFLRDNPEMAAEIEAAIRANAGLIAEKIMDVPGSERDGDEDAGDMEASA.

76–83 (GPESSGKT) serves as a coordination point for ATP. The tract at residues 346 to 365 (DVPGSERDGDEDAGDMEASA) is disordered. The segment covering 353-365 (DGDEDAGDMEASA) has biased composition (acidic residues).

This sequence belongs to the RecA family.

Its subcellular location is the cytoplasm. Can catalyze the hydrolysis of ATP in the presence of single-stranded DNA, the ATP-dependent uptake of single-stranded DNA by duplex DNA, and the ATP-dependent hybridization of homologous single-stranded DNAs. It interacts with LexA causing its activation and leading to its autocatalytic cleavage. The protein is Protein RecA of Parvibaculum lavamentivorans (strain DS-1 / DSM 13023 / NCIMB 13966).